The sequence spans 533 residues: Glucose-6-phosphate exchanger SLC37A1 (533 aa).

The chain crosses the membrane as a helical span at residues 18–38 (QWYRAFIFILTFLLYASFHLS). N-linked (GlcNAc...) asparagine glycosylation occurs at N81. 4 helical membrane-spanning segments follow: residues 100-120 (GALD…SGII), 129-149 (YLTF…LGYF), 157-177 (FYVV…PSVV), and 222-242 (SFVV…LFLI). N-linked (GlcNAc...) asparagine glycosylation is present at N263. A run of 7 helical transmembrane segments spans residues 304 to 324 (VVIL…TGAL), 334 to 354 (LCLL…PLYI), 366 to 386 (GELS…AGVI), 394 to 414 (ASTC…FSTV), 423 to 443 (IAML…ITTA), 466 to 486 (AIID…AGLL), and 490 to 510 (GWSN…LFLI).

Belongs to the major facilitator superfamily. Organophosphate:Pi antiporter (OPA) (TC 2.A.1.4) family. As to expression, expressed in numerous tissues, with highest expression in pancreas, kidney, bone marrow, spleen, liver, small intestine, as well as in fetal brain, liver and spleen.

The protein localises to the endoplasmic reticulum membrane. It catalyses the reaction D-glucose 6-phosphate(in) + phosphate(out) = D-glucose 6-phosphate(out) + phosphate(in). Inhibited by vanadate but not by chlorogenic acid. Functionally, inorganic phosphate and glucose-6-phosphate antiporter. May transport cytoplasmic glucose-6-phosphate into the lumen of the endoplasmic reticulum and translocate inorganic phosphate into the opposite direction. Independent of a lumenal glucose-6-phosphatase. May not play a role in homeostatic regulation of blood glucose levels. The polypeptide is Glucose-6-phosphate exchanger SLC37A1 (Homo sapiens (Human)).